Consider the following 377-residue polypeptide: Floricaula/leafy homolog (377 aa).

The segment covering 116–126 (RRRLDEEDPRR) has biased composition (basic and acidic residues). Residues 116 to 190 (RRRLDEEDPR…RKKGQRKVVD (75 aa)) are disordered. Residues 131–141 (SGDNNTNTLDA) show a composition bias toward polar residues. 3 consecutive DNA-binding regions follow at residues 206–210 (REHPF), 275–282 (NKPKMRHY), and 346–349 (YVPT).

The protein belongs to the FLO/LFY family. In developing inflorescences, leaf primordia and very young leaves.

The protein localises to the nucleus. Its function is as follows. Probable transcription factor. This chain is Floricaula/leafy homolog (FL), found in Populus trichocarpa (Western balsam poplar).